The sequence spans 580 residues: High affinity choline transporter 1 (580 aa).

Topologically, residues 1 to 6 are extracellular; that stretch reads MSFHVE. A helical membrane pass occupies residues 7 to 27; the sequence is GLVAIILFYLLIFLVGIWAAW. At 28-48 the chain is on the cytoplasmic side; sequence KTKNSGNPEERSEAIIVGGRD. A helical membrane pass occupies residues 49-69; that stretch reads IGLLVGGFTMTATWVGGGYIN. Residues 70-81 lie on the Extracellular side of the membrane; sequence GTAEAVYGPGCG. The chain crosses the membrane as a helical span at residues 82-102; sequence LAWAQAPIGYSLSLILGGLFF. Residues 103 to 125 are Cytoplasmic-facing; it reads AKPMRSKGYVTMLDPFQQIYGKR. The chain crosses the membrane as a helical span at residues 126 to 146; the sequence is MGGLLFIPALMGEMFWAAAIF. Over 147-164 the chain is Extracellular; that stretch reads SALGATISVIIDVDVNIS. The chain crosses the membrane as a helical span at residues 165 to 185; it reads VIVSALIAILYTLVGGLYSVA. The Cytoplasmic portion of the chain corresponds to 186 to 191; sequence YTDVVQ. The chain crosses the membrane as a helical span at residues 192–212; the sequence is LFCIFIGLWISVPFALSHPAV. The Extracellular segment spans residues 213–237; that stretch reads TDIGFTAVHAKYQSPWLGTIESVEV. A helical transmembrane segment spans residues 238-258; that stretch reads YTWLDNFLLLMLGGIPWQAYF. The Cytoplasmic portion of the chain corresponds to 259–274; the sequence is QRVLSSSSATYAQVLS. Residues 275-295 traverse the membrane as a helical segment; that stretch reads FLAAFGCLVMALPAICIGAIG. At 296-317 the chain is on the extracellular side; that stretch reads ASTDWNQTAYGYPDPKTKEEAD. Asn-301 is a glycosylation site (N-linked (GlcNAc...) asparagine). The helical transmembrane segment at 318-338 threads the bilayer; sequence MILPIVLQYLCPVYISFFGLG. Topologically, residues 339–376 are cytoplasmic; it reads AVSAAVMSSADSSILSASSMFARNIYQLSFRQNASDKE. Residues 377–397 form a helical membrane-spanning segment; the sequence is IVWVMRITVLVFGASATAMAL. Residues 398-406 lie on the Extracellular side of the membrane; the sequence is LTKTVYGLW. The helical transmembrane segment at 407–427 threads the bilayer; it reads YLSSDLVYIIIFPQLLCVLFI. Topologically, residues 428–435 are cytoplasmic; sequence KGTNTYGA. A helical transmembrane segment spans residues 436-456; it reads VAGYIFGLFLRITGGEPYLYL. Residues 457-481 are Extracellular-facing; the sequence is QPLIFYPGYYSDKNGIYNQRFPFKT. The helical transmembrane segment at 482–502 threads the bilayer; sequence LSMVTSFFTNICVSYLAKYLF. The mediates interaction with SEC14L1 stretch occupies residues 502 to 580; the sequence is FESGTLPPKL…EGSGTEDNLQ (79 aa). Residues 503 to 580 lie on the Cytoplasmic side of the membrane; that stretch reads ESGTLPPKLD…EGSGTEDNLQ (78 aa). A Dileucine-like motif motif is present at residues 527-532; the sequence is DKTILV.

This sequence belongs to the sodium:solute symporter (SSF) (TC 2.A.21) family. In terms of assembly, homooligomerizes at cell surface. Interacts with SEC14L1; may regulate SLC5A7. Post-translationally, phosphorylated by PKC and dephosphorylated by PP1/PP2A. Found in spinal cord, brain-stem, mid-brain and striatum. Specific for cholinergic neurons.

Its subcellular location is the presynaptic cell membrane. It is found in the cell projection. The protein localises to the axon. It localises to the early endosome membrane. The protein resides in the cytoplasmic vesicle. Its subcellular location is the secretory vesicle. It is found in the synaptic vesicle membrane. The enzyme catalyses choline(out) + n Na(+)(out) = choline(in) + n Na(+)(in). Choline uptake activity is regulated by SLC5A7/CHT1 internalization (inactive form) from the cell surface and recycling of internalized SLC5A7/CHT1 into the cell surface (active form). Activated by extracellular chloride ion. Specifically inhibited by nanomolar concentrations of hemicholinium 3. Its function is as follows. High-affinity Na(+)-coupled choline transmembrane symporter. Functions as an electrogenic, voltage-dependent transporter with variable charge/choline stoichiometry. Choline uptake and choline-induced current is also Cl(-)-dependent where Cl(-) is likely a regulatory ion rather than cotransported ion. Plays a critical role in acetylcholine (ACh) synthesis by taking up the substrate choline from the synaptic cleft into the presynaptic nerve terminals after neurotransmitter release. SLC5A7/CHT1-mediated choline high-affinity transport in cholinergic neurons is the rate-limiting step for production of ACh, thereby facilitating communication by subsequent action potentials. Localized predominantly in presynaptic terminal intracellular organelles, and translocated to the plasma membrane in active form in response to neuronal activity. The polypeptide is High affinity choline transporter 1 (Mus musculus (Mouse)).